The sequence spans 334 residues: WD repeat domain 54 (334 aa).

WD repeat units lie at residues 162 to 206 (GHQT…TLLT), 208 to 247 (IAGF…LHIQ), and 250 to 289 (AHAR…ESGS).

As to quaternary structure, homodimer and homotrimer; forms tight forms of dimers and trimers. Interacts with IZUMO1 and IZUMO1R/JUNO. In terms of processing, cross-linked to tightly form both dimers and trimers by TGM2. Cross-linking enhances the activation of EGF receptor-mediated signaling pathway. Cross-linking is inhibited by EGF. Post-translationally, ubiquitinated. EGF increases ubiquitination. Widely expressed in the ovary and testis (at protein level).

The protein resides in the vesicle. The protein localises to the cytoplasm. It is found in the cell membrane. Functionally, plays a role in the adhesion and fusion of the sperm-oocyte membrane through its interactions with IZUMO1 and IZUMO1R/JUNO. When cross-linked to form dimers and trimers, it has a regulatory effect on ERK signaling pathway activity in response to EGF stimulation. Colocalizes with the EGF receptor in WDR54-specific vesicle where it sustains the internalization and controls the degradation of the EGF receptor after EGF stimulation. In Rattus norvegicus (Rat), this protein is WD repeat domain 54 (Wdr54).